Here is a 130-residue protein sequence, read N- to C-terminus: Probable pilin MJ0835.1 (130 aa).

Positions 1 to 14 (MNTMENKIIKSKKA) are excised as a propeptide. The short motif at 15–23 (QVSLEFSFL) is the QXSXEXXXL element.

In terms of processing, the N-terminus is cleaved by the prepilin peptidase EppA, which recognizes the class III signal sequence.

It is found in the secreted. The protein resides in the cell surface. The protein localises to the fimbrium. The sequence is that of Probable pilin MJ0835.1 from Methanocaldococcus jannaschii (strain ATCC 43067 / DSM 2661 / JAL-1 / JCM 10045 / NBRC 100440) (Methanococcus jannaschii).